The sequence spans 212 residues: Thymidylate kinase (212 aa).

ATP is bound at residue 10-17; sequence GPDGAGKT.

The protein belongs to the thymidylate kinase family.

The enzyme catalyses dTMP + ATP = dTDP + ADP. Functionally, phosphorylation of dTMP to form dTDP in both de novo and salvage pathways of dTTP synthesis. The sequence is that of Thymidylate kinase from Enterococcus faecalis (strain ATCC 700802 / V583).